The primary structure comprises 721 residues: Sodium/hydrogen exchanger 6 (721 aa).

A disordered region spans residues 1-44; it reads MTSPKPWARSAGSCQTQRAVRTRKKECREEGESDTEKGPAASSA. Residues 26–37 are compositionally biased toward basic and acidic residues; sequence ECREEGESDTEK. 12 helical membrane passes run 91 to 111, 123 to 143, 196 to 216, 231 to 251, 272 to 292, 298 to 318, 344 to 364, 388 to 412, 434 to 454, 456 to 476, 499 to 519, and 535 to 555; these read SANL…IWLF, GLAM…IHVP, VTFD…FYAG, ILAY…SIMY, CLLF…AIFH, VELY…AIVL, IGIF…TGVV, MSWS…FCGI, FELL…LTLF, FQNH…IFLG, NFQH…ALAI, and LLIV…MLSC.

The protein belongs to the monovalent cation:proton antiporter 1 (CPA1) transporter (TC 2.A.36) family. Homodimer. Interacts with RACK1; regulates the distribution of SLC9A6 between endosomes and the plasma membrane. In terms of processing, ubiquitinated (in vitro). Post-translationally, glycosylated.

The protein resides in the endosome membrane. It localises to the recycling endosome membrane. The protein localises to the early endosome membrane. Its subcellular location is the late endosome membrane. It is found in the cell membrane. The enzyme catalyses Na(+)(in) + H(+)(out) = Na(+)(out) + H(+)(in). It catalyses the reaction K(+)(in) + H(+)(out) = K(+)(out) + H(+)(in). Its function is as follows. Endosomal Na(+), K(+)/H(+) antiporter. Mediates the electroneutral exchange of endosomal luminal H(+) for a cytosolic Na(+) or K(+). By facilitating proton efflux, SLC9A6 counteracts the acidity generated by vacuolar (V)-ATPase, thereby limiting luminal acidification. Responsible for alkalizing and maintaining the endosomal pH, and consequently in, e.g., endosome maturation and trafficking of recycling endosomal cargo. Plays a critical role during neurodevelopment by regulating synaptic development and plasticity. Implicated in the maintenance of cell polarity in a manner that is dependent on its ability to modulate intravesicular pH. Regulates intracelular pH in some specialized cells, osteoclasts and stereocilia where this transporter localizes to the plasma membrane. This chain is Sodium/hydrogen exchanger 6, found in Rattus norvegicus (Rat).